Here is a 176-residue protein sequence, read N- to C-terminus: dCTP deaminase (176 aa).

DCTP is bound by residues 102-107 (RSTFAR) and Asp118. The Proton donor/acceptor role is filled by Glu128. Residues Tyr160 and Gln167 each contribute to the dCTP site.

The protein belongs to the dCTP deaminase family. Homotrimer.

The catalysed reaction is dCTP + H2O + H(+) = dUTP + NH4(+). Its pathway is pyrimidine metabolism; dUMP biosynthesis; dUMP from dCTP (dUTP route): step 1/2. Functionally, catalyzes the deamination of dCTP to dUTP. The sequence is that of dCTP deaminase from Hyperthermus butylicus (strain DSM 5456 / JCM 9403 / PLM1-5).